The chain runs to 319 residues: Carbonic anhydrase 6 (319 aa).

A signal peptide spans 1–14 (MITLLFLLVVGAQA). The Alpha-carbonic anhydrase domain maps to 16 to 273 (HEWTYSEGVL…LNHRVVEANF (258 aa)). A disulfide bridge connects residues C37 and C219. A glycan (N-linked (GlcNAc...) asparagine) is linked at N62. Catalysis depends on H80, which acts as the Proton donor/acceptor. Zn(2+)-binding residues include H106, H108, and H133. Residue 215–216 (TT) participates in substrate binding. N251 carries an N-linked (GlcNAc...) asparagine glycan.

This sequence belongs to the alpha-carbonic anhydrase family. It depends on Zn(2+) as a cofactor. Major constituent of saliva.

It is found in the secreted. The catalysed reaction is hydrogencarbonate + H(+) = CO2 + H2O. Its function is as follows. Reversible hydration of carbon dioxide. Its role in saliva is unknown. The chain is Carbonic anhydrase 6 (CA6) from Bos taurus (Bovine).